The primary structure comprises 158 residues: Transcription elongation factor GreA (158 aa).

It belongs to the GreA/GreB family.

Functionally, necessary for efficient RNA polymerase transcription elongation past template-encoded arresting sites. The arresting sites in DNA have the property of trapping a certain fraction of elongating RNA polymerases that pass through, resulting in locked ternary complexes. Cleavage of the nascent transcript by cleavage factors such as GreA or GreB allows the resumption of elongation from the new 3'terminus. GreA releases sequences of 2 to 3 nucleotides. The polypeptide is Transcription elongation factor GreA (Psychrobacter sp. (strain PRwf-1)).